Here is a 297-residue protein sequence, read N- to C-terminus: Ribonuclease HIII (297 aa).

The region spanning 81 to 297 (IPIIGTDEVG…NTKKAQALLK (217 aa)) is the RNase H type-2 domain. A divalent metal cation-binding residues include D87, E88, and D192.

Belongs to the RNase HII family. RnhC subfamily. It depends on Mn(2+) as a cofactor. Mg(2+) is required as a cofactor.

The protein resides in the cytoplasm. The catalysed reaction is Endonucleolytic cleavage to 5'-phosphomonoester.. Endonuclease that specifically degrades the RNA of RNA-DNA hybrids. This is Ribonuclease HIII from Streptococcus agalactiae serotype Ia (strain ATCC 27591 / A909 / CDC SS700).